Reading from the N-terminus, the 243-residue chain is F-box protein pof15 (243 aa).

Residues glutamine 28 to leucine 73 enclose the F-box domain.

It functions in the pathway protein modification; protein ubiquitination. Its function is as follows. Probable substrate recognition component of a SCF (SKP1-CUL1-F-box protein) E3 ubiquitin-protein ligase complex that mediates the ubiquitination and subsequent proteasomal degradation of target proteins. The polypeptide is F-box protein pof15 (pof15) (Schizosaccharomyces pombe (strain 972 / ATCC 24843) (Fission yeast)).